We begin with the raw amino-acid sequence, 118 residues long: Cytochrome b-c1 complex subunit 7 (118 aa).

The segment at 1-32 (MVHLTKTLRFINNPGFRKFYYGLQGYNKYGLY) is igE-binding. Immunodominant epitope; induces specific IgE antibody production in mice. Causes degranulation of rat basophilic leukemia (RBL) cells and the release of beta-hexosaminidase from them.

Belongs to the UQCRB/QCR7 family. In terms of assembly, component of the ubiquinol-cytochrome c oxidoreductase (cytochrome b-c1 complex, complex III, CIII), a multisubunit enzyme composed of 3 respiratory subunits cytochrome b, cytochrome c1 and Rieske protein, 2 core protein subunits, and additional low-molecular weight protein subunits. The complex exists as an obligatory dimer and forms supercomplexes (SCs) in the inner mitochondrial membrane with cytochrome c oxidase (complex IV, CIV).

It is found in the mitochondrion inner membrane. Its function is as follows. Component of the ubiquinol-cytochrome c oxidoreductase, a multisubunit transmembrane complex that is part of the mitochondrial electron transport chain which drives oxidative phosphorylation. The respiratory chain contains 3 multisubunit complexes succinate dehydrogenase (complex II, CII), ubiquinol-cytochrome c oxidoreductase (cytochrome b-c1 complex, complex III, CIII) and cytochrome c oxidase (complex IV, CIV), that cooperate to transfer electrons derived from NADH and succinate to molecular oxygen, creating an electrochemical gradient over the inner membrane that drives transmembrane transport and the ATP synthase. The cytochrome b-c1 complex catalyzes electron transfer from ubiquinol to cytochrome c, linking this redox reaction to translocation of protons across the mitochondrial inner membrane, with protons being carried across the membrane as hydrogens on the quinol. In the process called Q cycle, 2 protons are consumed from the matrix, 4 protons are released into the intermembrane space and 2 electrons are passed to cytochrome c. The sequence is that of Cytochrome b-c1 complex subunit 7 from Dermatophagoides pteronyssinus (European house dust mite).